A 2241-amino-acid polypeptide reads, in one-letter code: MLPCKKRRTTVTESLQHKGNQEENNVDLESAVKPESDQVKDLSSVSLSWDPSHGRVAGFEVQSLQDAGNQLGMEDTSLSSGMLTQNTNVPILEGVDVAISQGITLPSLESFHPLNIHIGKGKLHATGSKRGKKMTLRPGPVTQEDRCDHLTLKEPFSGEPSEEVKEEGGKPQMNSEGEIPSLPSGSQSAKPVSQPRKSTQPDVCASPQEKPLRTLFHQPEEEIEDGGLFIPMEEQDNEESEKRRKKKKGTKRKRDGRGQEGTLAYDLKLDDMLDRTLEDGAKQHNLTAVNVRNILHEVITNEHVVAMMKAAISETEDMPMFEPKMTRSKLKEVVEKGVVIPTWNISPIKKANEIKPPQFVDIHLEEDDSSDEEYQPDDEEEDETAEESLLESDVESTASSPRGAKKSRLRQSSEMTETDEESGILSEAEKVTTPAIRHISAEVVPMGPPPPPKPKQTRDSTFMEKLHAVDEELASSPVCMDSFQPMDDSLIAFRTRSKMPLKDVPLGQLEAELQAPDITPDMYDPNTADDEDWKMWLGGLMNDDVGNEDEADDDDDPEYNFLEDLDEPDTEDFRTDRAVRITKKEVNELMEELFETFQDEMGFSNMEDDGPEEEECVAEPRPNFNTPQALRFEEPLANLLNEQHRTVKELFEQLKMKKSSAKQLQEVEKVKPQSEKVHQTLILDPAQRKRLQQQMQQHVQLLTQIHLLATCNPNLNPEATTTRIFLKELGTFAQSSIALHHQYNPKFQTLFQPCNLMGAMQLIEDFSTHVSIDCSPHKTVKKTANEFPCLPKQVAWILATSKVFMYPELLPVCSLKAKNPQDKIVFTKAEDNLLALGLKHFEGTEFPNPLISKYLLTCKTAHQLTVRIKNLNMNRAPDNIIKFYKKTKQLPVLGKCCEEIQPHQWKPPIEREEHRLPFWLKASLPSIQEELRHMADGAREVGNMTGTTEINSDRSLEKDNLELGSESRYPLLLPKGVVLKLKPVATRFPRKAWRQKRSSVLKPLLIQPSPSLQPSFNPGKTPARSTHSEAPPSKMVLRIPHPIQPATVLQTVPGVPPLGVSGGESFESPAALPAVPPEARTSFPLSESQTLLSSAPVPKVMLPSLAPSKFRKPYVRRRPSKRRGVKASPCMKPAPVIHHPASVIFTVPATTVKIVSLGGGCNMIQPVNAAVAQSPQTIPITTLLVNPTSFPCPLNQSLVASSVSPLIVSGNSVNLPIPSTPEDKAHVNVDIACAVADGENAFQGLEPKLEPQELSPLSATVFPKVEHSPGPPLADAECQEGLSENSACRWTVVKTEEGRQALEPLPQGIQESLNNPTPGDLEEIVKMEPEEAREEISGSPERDICDDIKVEHAVELDTGAPSEELSSAGEVTKQTVLQKEEERSQPTKTPSSSQEPPDEGTSGTDVNKGSSKNALSSMDPEVRLSSPPGKPEDSSSVDGQSVGTPVGPETGGEKNGPEEEEEEDFDDLTQDEEDEMSSASEESVLSVPELQETMEKLTWLASERRMSQEGESEEENSQEENSEPEEEEEEEAEGMESLQKEDEMTDEAVGDSAEKPPTFASPETAPEVETSRTPPGESIKAAGKGRNNHRARNKRGSRARASKDTSKLLLLYDEDILERDPLREQKDLAFAQAYLTRVREALQHIPGKYEDFLQVIYEFESSTQRRTAVDLYKSLQILLQDWPQLLKDFAAFLLPEQALACGLFEEQQAFEKSRKFLRQLEICFAENPSHHQKIIKVLQGCADCLPQEITELKTQMWQLLKGHDHLQDEFSIFFDHLRPAASRMGDFEEINWTEEKEYEFDGFEEVALPDVEEEEEPPKIPTASKNKRKKEIGVQNHDKETEWPDGAKDCACSCHEGGPDSKLKKSKRRSCSHCSSKVCDSKSYKSKEPHELVGSSPHREASPMPGAKEAGQGKDMMEEEAPEERESTEATQSRTVRTTRKGEMPVSAGLAVGSTLPSPREVTVTERLLLDGPPPHSPETPQFPPTTGAVLYTVKRNQVGPEVRSCPKASPRLQKEREGQKAVSESEALMLVWDASETEKLPGTVEPPASFLSPVSSKTRDAGRRHVSGKPDTQERWLPSSRARVKTRDRTCPVHESPSGIDTSETSPKAPRGGLAKDSGTQAKGPEGEQQPKAAEATVCANNSKVSSTGEKVVLWTREADRVILTMCQEQGAQPQTFNIISQQLGNKTPAEVSHRFRELMQLFHTACEASSEDEDDATSTSNADQLSDHGDLLSEEELDE.

Disordered stretches follow at residues 1-46 (MLPC…SSVS) and 122-259 (KLHA…GRGQ). The span at 30–40 (SAVKPESDQVK) shows a compositional bias: basic and acidic residues. Residues 122 to 135 (KLHATGSKRGKKMT) are compositionally biased toward basic residues. The span at 143 to 152 (QEDRCDHLTL) shows a compositional bias: basic and acidic residues. Over residues 183–201 (PSGSQSAKPVSQPRKSTQP) the composition is skewed to polar residues. The residue at position 206 (Ser206) is a Phosphoserine. The span at 243–255 (RRKKKKGTKRKRD) shows a compositional bias: basic residues. Ser346 carries the post-translational modification Phosphoserine. The span at 366–394 (EDDSSDEEYQPDDEEEDETAEESLLESDV) shows a compositional bias: acidic residues. The segment at 366 to 460 (EDDSSDEEYQ…PPKPKQTRDS (95 aa)) is disordered. Positions 600 to 1339 (EMGFSNMEDD…EEAREEISGS (740 aa)) are required for interaction with YY1, SIN3A and HDAC1, and transcriptional repression activity. At Ser775 the chain carries Phosphoserine. Disordered regions lie at residues 1008–1031 (PSPS…SEAP) and 1111–1131 (RKPY…SPCM). Basic residues predominate over residues 1111 to 1125 (RKPYVRRRPSKRRGV). Ser1268 carries the post-translational modification Phosphoserine. Disordered stretches follow at residues 1301–1320 (ALEP…TPGD) and 1356–1601 (LDTG…RARA). The span at 1386-1416 (PTKTPSSSQEPPDEGTSGTDVNKGSSKNALS) shows a compositional bias: polar residues. At Ser1426 the chain carries Phosphoserine. Positions 1434–1443 (SSSVDGQSVG) are enriched in polar residues. 2 stretches are compositionally biased toward acidic residues: residues 1458 to 1476 (EEEE…EDEM) and 1510 to 1534 (GESE…EAEG). Basic residues predominate over residues 1586–1600 (RNNHRARNKRGSRAR). 2 consecutive PAH domains span residues 1624–1696 (EQKD…LLPE) and 1706–1777 (EQQA…FDHL). The tract at residues 1809–1960 (PDVEEEEEPP…AVGSTLPSPR (152 aa)) is disordered. Composition is skewed to basic and acidic residues over residues 1836 to 1848 (NHDK…DGAK) and 1879 to 1901 (CDSK…HREA). A phosphoserine mark is found at Ser1896, Ser1902, and Ser1977. 3 disordered regions span residues 2002-2025 (EVRS…AVSE), 2039-2149 (EKLP…VSST), and 2208-2241 (CEAS…ELDE). A Phosphoserine modification is found at Ser2107. Residues 2140 to 2149 (CANNSKVSST) are compositionally biased toward polar residues. In terms of domain architecture, Myb-like spans 2148–2201 (STGEKVVLWTREADRVILTMCQEQGAQPQTFNIISQQLGNKTPAEVSHRFRELM).

Found in a complex with YY1, SIN3A and HDAC1.

Its subcellular location is the nucleus. Has transcriptional repressor activity, probably as part of a complex with YY1, SIN3A and HDAC1. Required for B cell lymphopoiesis. This Homo sapiens (Human) protein is GON-4-like protein (GON4L).